The following is a 233-amino-acid chain: Small ribosomal subunit protein uS2c (233 aa).

Belongs to the universal ribosomal protein uS2 family.

The protein localises to the plastid. Its subcellular location is the apicoplast. This chain is Small ribosomal subunit protein uS2c, found in Toxoplasma gondii.